Here is a 196-residue protein sequence, read N- to C-terminus: Protein LSM12 homolog B (196 aa).

Residues 3–70 form the Sm domain; the sequence is APGPGEYFSV…LAYVSEVDII (68 aa). One can recognise an AD domain in the interval 81–175; the sequence is ASLNFNKLVN…IVEKHFRDVE (95 aa).

It belongs to the LSM12 family.

The protein is Protein LSM12 homolog B (lsm12b) of Danio rerio (Zebrafish).